The primary structure comprises 511 residues: Probable G-protein coupled receptor 152 (511 aa).

Positions 1–20 are disordered; the sequence is MDTAVEANLGAAGHGPRTEL. At 1-33 the chain is on the extracellular side; it reads MDTAVEANLGAAGHGPRTELSDEDYYPQGSWDT. The chain crosses the membrane as a helical span at residues 34-54; it reads VFLVALLLLGLPANGLMAWLA. At 55-65 the chain is on the cytoplasmic side; the sequence is GSQARHGAGTR. A helical transmembrane segment spans residues 66 to 86; sequence LALLLLSLALSDFLFLAAATF. The Extracellular portion of the chain corresponds to 87–105; that stretch reads QILEIQHGGHWPLGTAACR. A disulfide bond links cysteine 104 and cysteine 182. The helical transmembrane segment at 106-126 threads the bilayer; that stretch reads FYYFLWGVSYSSGLFLLTALS. Residues 127-148 lie on the Cytoplasmic side of the membrane; that stretch reads LDRCLLALCPRWYPGHRPARLP. A helical membrane pass occupies residues 149–169; it reads LWVCAGVWVLATLFSVPWLVF. Residues 170-194 are Extracellular-facing; sequence PEAAVWWYDLVICLDFWDTEELPLR. Residues 195-215 traverse the membrane as a helical segment; that stretch reads MLEILGGFLPFLLLLVCHVLT. The Cytoplasmic segment spans residues 216–258; that stretch reads QATACRTCCGHQPRRMACHGFARVAKTILSAYVVLRLPYQLAQ. Residues 259 to 279 form a helical membrane-spanning segment; it reads LLYLAFLWDVYPGYLLWEALV. At 280–282 the chain is on the extracellular side; that stretch reads YSD. The chain crosses the membrane as a helical span at residues 283-303; sequence YLILLNSCLSPFLCLAASADL. The Cytoplasmic portion of the chain corresponds to 304–511; the sequence is RALLRTVLSS…PEEAPSAGPT (208 aa). Disordered stretches follow at residues 328 to 349, 361 to 386, and 407 to 511; these read PAEPQTLPGPTSEGQSRLDSVV, SDSVVQPEVSPSAQPQSDSVAQPTVG, and PQLD…AGPT. Polar residues-rich tracts occupy residues 335-345 and 369-386; these read PGPTSEGQSRL and VSPSAQPQSDSVAQPTVG. The span at 419 to 433 shows a compositional bias: low complexity; sequence PSAQPQSKSVVQPQV. 2 stretches are compositionally biased toward polar residues: residues 435-453 and 462-473; these read PLTQPQLDPVAQPQSNTET and SASNPGEENSSG.

This sequence belongs to the G-protein coupled receptor 1 family.

The protein localises to the cell membrane. In terms of biological role, orphan receptor. This is Probable G-protein coupled receptor 152 (Gpr152) from Mus musculus (Mouse).